A 527-amino-acid chain; its full sequence is Protein PLASTID TRANSCRIPTIONALLY ACTIVE 12, chloroplastic (527 aa).

A chloroplast-targeting transit peptide spans 1 to 30; sequence MASISTTTWLYRGQVCTDSGKSSNCIVQRR. The segment at 1–115 is PHYA-interacting region 1 (PIR1); sequence MASISTTTWL…ASIPGEDYWP (115 aa). Positions 89 to 188 are disordered; sequence SYMDSTSGKL…NDSSDGFVTY (100 aa). Over residues 163 to 181 the composition is skewed to acidic residues; that stretch reads TNDEVSDSEDSSEEEENDS. Short sequence motifs (nuclear localization signal) lie at residues 204-211 and 235-242; these read DKKLGRPH and WRKPEKEQ. Residues 252–352 form a PHYA-interacting region 2 (PIR2) region; sequence DVETVFLKAM…EMFSHQTDRE (101 aa). Over residues 458-471 the composition is skewed to acidic residues; that stretch reads GENDDDEDDADVEK. Residues 458-527 are disordered; the sequence is GENDDDEDDA…LMDFEEETDP (70 aa). Over residues 485 to 504 the composition is skewed to basic and acidic residues; that stretch reads ETPELRTAKPKPKKEGRMSL. The segment covering 506 to 527 has biased composition (acidic residues); that stretch reads EAVDDAENLTDFLMDFEEETDP. A Required and sufficient for transcriptional transactivation activity and to trigger PIF proteins degradation motif is present at residues 512–520; the sequence is ENLTDFLMD.

As to quaternary structure, component of the transcriptionally active chromosome (TAC) complexes. Interacts with PTAC14 and PTAC7. Binds directly to PTAC6/PAP8 in the nucleus. Interacts with MED14. Binds to SL1/MTERF3. Binds to photoactivated phytochromes (e.g. PHYA and PHYB) via their photosensory domains; these interactions stimulate its light-mediated accumulation. Associates, via its N-terminal region, with phytochrome-interacting factors (PIFs) including PIF1, PIF3, PIF4, PIF5, PIF6, BHLH72/PIF7, UNE10/PIF8 and PIL1. Binds to RAD4. Associates with MRL7/RCB. As to expression, mostly expressed in cotyledons, leaves, stems and flowers, but barely in roots.

Its subcellular location is the plastid. The protein localises to the chloroplast. It localises to the nucleus. Functionally, involved in plastid gene expression. Acidic transcriptional coactivator necessary for the transactivation of many PIFs target genes (class B genes), particularly during the regulation of hypocotyl growth. Plays dual opposite roles in regulating hypocotyl growth, preventing it in red and far-red conditions, but promoting it otherwise. Required in the nucleus for the initiation of photomorphogenesis mediated by phytochromes (PHYs) (e.g. PHYA and PHYB) by mediating PHYs localization to photobodies, especially in response to red and far-red light, and implicating phytochrome nuclear bodies as sites of proteolysis for PHYs and PIFs proteins (e.g. PIF1 and PIF3). Acts downstream of PHYs and upstream of DET1. Involved in UV tolerance in both roots and hypocotyls, specifically in dark conditions. Element of a PIF4/HMR/MED14-dependent thermoresponsive process; acts as a PIF4 transcriptional coactivator to trigger the thermoresponsive growth-relevant genes (e.g. mainly involved in biosynthesis and signaling of the phytohormone auxin) and promote warm-temperature-dependent (e.g. 27 degrees Celsius) PIF4 and MED14 stabilization and accumulation, being more prominently involved in long days (LD) and continuous red light (Rc) than in short days (SD), thus modulating warm temperature elicitation of MED14-dependent thermomorphogenesis (e.g. hypocotyl elongation). The chain is Protein PLASTID TRANSCRIPTIONALLY ACTIVE 12, chloroplastic from Arabidopsis thaliana (Mouse-ear cress).